The primary structure comprises 333 residues: L-lactate dehydrogenase B chain (333 aa).

NAD(+) contacts are provided by residues 29-57 (GQVG…LEDK) and R99. Substrate is bound by residues R106, N138, and R169. N138 lines the NAD(+) pocket. The active-site Proton acceptor is the H193. T248 is a substrate binding site.

It belongs to the LDH/MDH superfamily. LDH family. As to quaternary structure, homotetramer.

Its subcellular location is the cytoplasm. The enzyme catalyses (S)-lactate + NAD(+) = pyruvate + NADH + H(+). The protein operates within fermentation; pyruvate fermentation to lactate; (S)-lactate from pyruvate: step 1/1. Its function is as follows. Interconverts simultaneously and stereospecifically pyruvate and lactate with concomitant interconversion of NADH and NAD(+). The polypeptide is L-lactate dehydrogenase B chain (LDHB) (Pelodiscus sinensis japonicus (Chinese soft-shelled turtle)).